The following is a 238-amino-acid chain: MRPSNRAPDQLREVEIIRHYTKHAEGSVLVKFGDTHVLCTASVEDKVPPFLRGRNQGWTTAEYGMLPRSTGSRMDREAARGKQSGRTQEIQRLIGRSLRAVIDLGKLGERTIHLDCDVIQADGGTRTASITGAYVALHDAVGFMLANDMIQESPLRDAVAAISVGVYQGTPVLDLDYIEDSACDTDMNVVMTGSGGFVEIQGTAEGEPFQRAAMNRMLELAESGIRTLLLKQKEALGL.

Residues Gly-64–Arg-86 form a disordered region. Phosphate-binding positions include Arg-86 and Gly-124–Arg-126.

Belongs to the RNase PH family. In terms of assembly, homohexameric ring arranged as a trimer of dimers.

The enzyme catalyses tRNA(n+1) + phosphate = tRNA(n) + a ribonucleoside 5'-diphosphate. Functionally, phosphorolytic 3'-5' exoribonuclease that plays an important role in tRNA 3'-end maturation. Removes nucleotide residues following the 3'-CCA terminus of tRNAs; can also add nucleotides to the ends of RNA molecules by using nucleoside diphosphates as substrates, but this may not be physiologically important. Probably plays a role in initiation of 16S rRNA degradation (leading to ribosome degradation) during starvation. The sequence is that of Ribonuclease PH from Methylobacillus flagellatus (strain ATCC 51484 / DSM 6875 / VKM B-1610 / KT).